The sequence spans 425 residues: Mothers against decapentaplegic homolog 3 (425 aa).

The residue at position 2 (serine 2) is an N-acetylserine. Threonine 8 bears the Phosphothreonine; by CDK2 and CDK4 mark. The 127-residue stretch at 10-136 (PIVKRLLGWK…YQRVETPVLP (127 aa)) folds into the MH1 domain. Residue lysine 33 forms a Glycyl lysine isopeptide (Lys-Gly) (interchain with G-Cter in ubiquitin) linkage. Residue cysteine 64 coordinates Zn(2+). Lysine 81 participates in a covalent cross-link: Glycyl lysine isopeptide (Lys-Gly) (interchain with G-Cter in ubiquitin). Zn(2+)-binding residues include cysteine 109, cysteine 121, and histidine 126. The tract at residues 137 to 231 (PVLVPRHTEI…QPVTYCEPAF (95 aa)) is linker. Over residues 165–177 (NFPAGIEPQSNIP) the composition is skewed to polar residues. The segment at 165-208 (NFPAGIEPQSNIPETPPPGYLSEDGETSDHQMNHSMDAGSPNLS) is disordered. Phosphothreonine; by CDK2, CDK4 and MAPK is present on threonine 179. Position 204 is a phosphoserine; by GSK3 and MAPK (serine 204). Phosphoserine; by MAPK is present on serine 208. Residue serine 213 is modified to Phosphoserine; by CDK2 and CDK4. The MH2 domain occupies 232–425 (WCSISYYELN…SPSIRCSSVS (194 aa)). Positions 271-324 (LGLLSNVNRNAAVELTRRHIGRGVRLYYIGGEVFAECLSDSAIFVQSPNCNQRY) are sufficient for interaction with XPO4. Lysine 378 is modified (N6-acetyllysine). A Phosphoserine modification is found at serine 416. Phosphoserine; by CK1 is present on serine 418. 3 positions are modified to phosphoserine; by TGFBR1: serine 422, serine 423, and serine 425.

It belongs to the dwarfin/SMAD family. In terms of assembly, monomer; in the absence of TGF-beta. Homooligomer; in the presence of TGF-beta. Heterotrimer; forms a heterotrimer in the presence of TGF-beta consisting of two molecules of C-terminally phosphorylated SMAD2 or SMAD3 and one of SMAD4 to form the transcriptionally active SMAD2/SMAD3-SMAD4 complex. Part of a complex consisting of MAGI2/ARIP1, ACVR2A, ACVR1B and SMAD3. Forms a complex with SMAD2 and TRIM33 upon addition of TGF-beta. Found in a complex composed of SMAD3, RAN and XPO4; within the complex interacts directly with XPO4. Component of the multimeric complex SMAD3/SMAD4/JUN/FOS which forms at the AP1 promoter site; required for synergistic transcriptional activity in response to TGF-beta. Part of a ternary complex composed of SMAD3, ITCH/AIP4 and NEDD9/HEF1; within the complex NEDD9/HEF1 interacts (via N-terminus) with ITCH/AIP4; the complex mediates ubiquitination and proteasomal degradation of NEDD9/HEF1. Interacts with NEDD9; the interaction promotes NEDD9 ubiquitination and proteasomal degradation. Interacts (via an N-terminal domain) with JUN (via its basic DNA binding and leucine zipper domains); this interaction is essential for DNA binding and cooperative transcriptional activity in response to TGF-beta. Identified in a complex that contains at least ZNF451, SMAD2, SMAD3 and SMAD4. Interacts with PPM1A; the interaction dephosphorylates SMAD3 in the C-terminal SXS motif leading to disruption of the SMAD2/3-SMAD4 complex, nuclear export and termination of TGF-beta signaling. Interacts (via MH2 domain) with ZMIZ1 (via SP-RING-type domain); in the TGF-beta signaling pathway increases the activity of the SMAD3/SMAD4 transcriptional complex. Interacts (when phosphorylated) with RNF111; RNF111 acts as an enhancer of the transcriptional responses by mediating ubiquitination and degradation of SMAD3 inhibitors. Interacts (dephosphorylated form via the MH1 and MH2 domains) with RANBP3 (via its C-terminal R domain); the interaction results in the export of dephosphorylated SMAD3 out of the nucleus and termination of the TGF-beta signaling. Interacts (via MH2 domain) with LEMD3; the interaction represses SMAD3 transcriptional activity through preventing the formation of the heteromeric complex with SMAD4 and translocation to the nucleus. Interacts (via the linker region) with EP300 (C-terminal); the interaction promotes SMAD3 acetylation and is enhanced by TGF-beta phosphorylation in the C-terminal of SMAD3. This interaction can be blocked by competitive binding of adenovirus oncoprotein E1A to the same C-terminal site on EP300, which then results in partially inhibited SMAD3/SMAD4 transcriptional activity. Interacts with TGFBR1. Interacts with TGFB1I1. Interacts with PRDM16. Interacts with SNW1. Interacts (via MH2 domain) with ZFYVE9. Interacts with HDAC1. Interacts with TGIF2. Interacts with SKOR1. Interacts with SKOR2. Interacts with DACH1; the interaction inhibits the TGF-beta signaling. Interacts with RBPMS. Interacts (via MH2 domain) with MECOM. Interacts with WWTR1 (via its coiled-coil domain). Interacts with SKI; the interaction represses SMAD3 transcriptional activity. Interacts with MEN1. Interacts with IL1F7. Interaction with CSNK1G2. Interacts with PDPK1 (via PH domain). Interacts with DAB2; the interactions are enhanced upon TGF-beta stimulation. Interacts with USP15. Interacts with PPP5C; the interaction decreases SMAD3 phosphorylation and protein levels. Interacts with LDLRAD4 (via the SMAD interaction motif). Interacts with PMEPA1. Interacts with ZNF451. Interacts with ZFHX3. Interacts weakly with ZNF8. Interacts with STUB1, HSPA1A, HSPA1B, HSP90AA1 and HSP90AB1. Interacts with YAP1 (when phosphorylated at 'Ser-55'). Interacts with MAGI2/ARIP1. Interacts (via MH2 domain) with CITED2 (via C-terminus). Interacts with HGS. Interacts with WWP1. Interacts with TTRAP. Interacts with FOXL2. Interacts with PML. Interacts with NEDD4L; the interaction requires TGF-beta stimulation. Interacts with ZC3H3. Interacts with TGIF. Interacts with CREBBP. Interacts with ATF2. Interacts with NEDD9; the interaction is inhibited by oxidation of NEDD9. Interacts with MTMR4; negatively regulates TGF-beta signaling through SMAD3 dephosphorylation and retention in endosomes. In terms of processing, phosphorylated on serine and threonine residues. Enhanced phosphorylation in the linker region on Thr-179, Ser-204 and Ser-208 on EGF and TGF-beta treatment. Ser-208 is the main site of MAPK-mediated phosphorylation. CDK-mediated phosphorylation occurs in a cell-cycle dependent manner and inhibits both the transcriptional activity and antiproliferative functions of SMAD3. This phosphorylation is inhibited by flavopiridol. Maximum phosphorylation at the G(1)/S junction. Also phosphorylated on serine residues in the C-terminal SXS motif by TGFBR1 and ACVR1. TGFBR1-mediated phosphorylation at these C-terminal sites is required for interaction with SMAD4, nuclear location and transactivational activity, and appears to be a prerequisite for the TGF-beta mediated phosphorylation in the linker region. Dephosphorylated in the C-terminal SXS motif by PPM1A. This dephosphorylation disrupts the interaction with SMAD4, promotes nuclear export and terminates TGF-beta-mediated signaling. Phosphorylation at Ser-418 by CSNK1G2/CK1 promotes ligand-dependent ubiquitination and subsequent proteasome degradation, thus inhibiting SMAD3-mediated TGF-beta responses. Phosphorylated by PDPK1. Post-translationally, acetylation in the nucleus by EP300 in the MH2 domain regulates positively its transcriptional activity and is enhanced by TGF-beta. Poly-ADP-ribosylated by PARP1 and PARP2. ADP-ribosylation negatively regulates SMAD3 transcriptional responses during the course of TGF-beta signaling. In terms of processing, ubiquitinated. Monoubiquitinated, leading to prevent DNA-binding. Deubiquitination by USP15 alleviates inhibition and promotes activation of TGF-beta target genes. Ubiquitinated by RNF111, leading to its degradation: only SMAD3 proteins that are 'in use' are targeted by RNF111, RNF111 playing a key role in activating SMAD3 and regulating its turnover. Undergoes STUB1-mediated ubiquitination and degradation. As to expression, highly expressed in the brain and ovary. Detected in the pyramidal cells of the hippocampus, granule cells of the dentate gyrus, granular cells of the cerebral cortex and the granulosa cells of the ovary.

It is found in the cytoplasm. The protein localises to the nucleus. Its function is as follows. Receptor-regulated SMAD (R-SMAD) that is an intracellular signal transducer and transcriptional modulator activated by TGF-beta (transforming growth factor) and activin type 1 receptor kinases. Binds the TRE element in the promoter region of many genes that are regulated by TGF-beta and, on formation of the SMAD3/SMAD4 complex, activates transcription. Also can form a SMAD3/SMAD4/JUN/FOS complex at the AP-1/SMAD site to regulate TGF-beta-mediated transcription. Has an inhibitory effect on wound healing probably by modulating both growth and migration of primary keratinocytes and by altering the TGF-mediated chemotaxis of monocytes. This effect on wound healing appears to be hormone-sensitive. Regulator of chondrogenesis and osteogenesis and inhibits early healing of bone fractures. Positively regulates PDPK1 kinase activity by stimulating its dissociation from the 14-3-3 protein YWHAQ which acts as a negative regulator. The chain is Mothers against decapentaplegic homolog 3 (SMAD3) from Sus scrofa (Pig).